A 160-amino-acid polypeptide reads, in one-letter code: ATP synthase subunit b 3 (160 aa).

The helical transmembrane segment at 5-25 (PTFWVLVAFVLFVAAVWRIAA) threads the bilayer.

It belongs to the ATPase B chain family. F-type ATPases have 2 components, F(1) - the catalytic core - and F(0) - the membrane proton channel. F(1) has five subunits: alpha(3), beta(3), gamma(1), delta(1), epsilon(1). F(0) has three main subunits: a(1), b(2) and c(10-14). The alpha and beta chains form an alternating ring which encloses part of the gamma chain. F(1) is attached to F(0) by a central stalk formed by the gamma and epsilon chains, while a peripheral stalk is formed by the delta and b chains.

It is found in the cell inner membrane. Functionally, f(1)F(0) ATP synthase produces ATP from ADP in the presence of a proton or sodium gradient. F-type ATPases consist of two structural domains, F(1) containing the extramembraneous catalytic core and F(0) containing the membrane proton channel, linked together by a central stalk and a peripheral stalk. During catalysis, ATP synthesis in the catalytic domain of F(1) is coupled via a rotary mechanism of the central stalk subunits to proton translocation. In terms of biological role, component of the F(0) channel, it forms part of the peripheral stalk, linking F(1) to F(0). The protein is ATP synthase subunit b 3 of Rhodospirillum centenum (strain ATCC 51521 / SW).